We begin with the raw amino-acid sequence, 260 residues long: MTDPSAQNPDHELLDEPRLVVEPGVAARVAAIAAPVLQGMGYRLVRIKVSGEAGCTVQIMAERPDGSIQIEDCEAISKALSPVLDVADPIDKAYRLEISSPGIDRPLVRRSDFERYAGHLAKIEMAVAHQGRKRFRGVLQGVEDNAVRLHRDDIRNNDDESEVMLVMEDIADARLVLTDELIAESMRRGKIAEREMKQSLGILPPPPPHAKTDPAKRGTPKPKLENGKKAPGKIPPKNTKEHRLAAERLRRGDIDPIEGE.

Positions 198–260 are disordered; that stretch reads QSLGILPPPP…RGDIDPIEGE (63 aa). Basic and acidic residues-rich tracts occupy residues 210-228 and 238-254; these read AKTD…ENGK and NTKE…RGDI.

Belongs to the RimP family.

It is found in the cytoplasm. In terms of biological role, required for maturation of 30S ribosomal subunits. The polypeptide is Ribosome maturation factor RimP (Nitrobacter winogradskyi (strain ATCC 25391 / DSM 10237 / CIP 104748 / NCIMB 11846 / Nb-255)).